The sequence spans 292 residues: Phosphatidylserine decarboxylase proenzyme (292 aa).

Residues aspartate 89, histidine 146, and serine 252 each act as charge relay system; for autoendoproteolytic cleavage activity in the active site. Catalysis depends on serine 252, which acts as the Schiff-base intermediate with substrate; via pyruvic acid; for decarboxylase activity. The residue at position 252 (serine 252) is a Pyruvic acid (Ser); by autocatalysis.

The protein belongs to the phosphatidylserine decarboxylase family. PSD-B subfamily. Prokaryotic type I sub-subfamily. As to quaternary structure, heterodimer of a large membrane-associated beta subunit and a small pyruvoyl-containing alpha subunit. The cofactor is pyruvate. In terms of processing, is synthesized initially as an inactive proenzyme. Formation of the active enzyme involves a self-maturation process in which the active site pyruvoyl group is generated from an internal serine residue via an autocatalytic post-translational modification. Two non-identical subunits are generated from the proenzyme in this reaction, and the pyruvate is formed at the N-terminus of the alpha chain, which is derived from the carboxyl end of the proenzyme. The autoendoproteolytic cleavage occurs by a canonical serine protease mechanism, in which the side chain hydroxyl group of the serine supplies its oxygen atom to form the C-terminus of the beta chain, while the remainder of the serine residue undergoes an oxidative deamination to produce ammonia and the pyruvoyl prosthetic group on the alpha chain. During this reaction, the Ser that is part of the protease active site of the proenzyme becomes the pyruvoyl prosthetic group, which constitutes an essential element of the active site of the mature decarboxylase.

The protein resides in the cell membrane. The catalysed reaction is a 1,2-diacyl-sn-glycero-3-phospho-L-serine + H(+) = a 1,2-diacyl-sn-glycero-3-phosphoethanolamine + CO2. Its pathway is phospholipid metabolism; phosphatidylethanolamine biosynthesis; phosphatidylethanolamine from CDP-diacylglycerol: step 2/2. In terms of biological role, catalyzes the formation of phosphatidylethanolamine (PtdEtn) from phosphatidylserine (PtdSer). The sequence is that of Phosphatidylserine decarboxylase proenzyme from Shewanella sp. (strain MR-4).